Here is a 743-residue protein sequence, read N- to C-terminus: Fork head transcription factor 1 (743 aa).

In terms of domain architecture, FHA spans 39–94 (VTMGRKASNSSDCDVHLGDTKAISRQHAKIFYSFPNQRFEISVMGKNGAFVDGEFV). Disordered stretches follow at residues 214–291 (QPPK…ATQK), 411–450 (GISA…LQNG), and 529–743 (QMQG…SSYT). Positions 221-230 (VSPSSIQRLS) are enriched in polar residues. The fork-head DNA-binding region spans 291 to 385 (KPNLSYANLI…EGNFFRRTKK (95 aa)). Basic and acidic residues predominate over residues 434–443 (SRGENVEDRP). The segment covering 529–539 (QMQGPQQVQQQ) has biased composition (low complexity). Over residues 562 to 576 (NITSPSPSISVTQRP) the composition is skewed to polar residues. Over residues 614–624 (SAGPSSVRSSS) the composition is skewed to low complexity. 3 stretches are compositionally biased toward polar residues: residues 625-643 (YNST…QNLH), 670-686 (TGNQ…ASSF), and 695-726 (ENGS…NSSD).

It is found in the nucleus. Acts as a transcriptional activator for ribosomal protein genes (RPG) that contain a HomolE UAS (upstream activating sequence) in addition to a HomolD promoter element; HomolD plays the role of a TATA box in RPG promoters that do not contain a canonical TATA sequence. Binds to HomolE elements with consensus sequence 3'-ACCCTACCCT-5' (or its inverted form AGGGTAGGGT). This is Fork head transcription factor 1 from Schizosaccharomyces pombe (strain 972 / ATCC 24843) (Fission yeast).